A 465-amino-acid chain; its full sequence is Chromosomal replication initiator protein DnaA (465 aa).

Residues 1 to 87 (MLWTDCLTRL…RPGSILSSSE (87 aa)) form a domain I, interacts with DnaA modulators region. The disordered stretch occupies residues 81–123 (SILSSSEQPATTTAALQTAPIPQPAKVKREPEPVANTAVSSKS). Over residues 88-100 (QPATTTAALQTAP) the composition is skewed to low complexity. The segment at 88-127 (QPATTTAALQTAPIPQPAKVKREPEPVANTAVSSKSSKKK) is domain II. The segment at 128 to 345 (LLNPQFTFSL…GALNKVVAIS (218 aa)) is domain III, AAA+ region. Residues Gly173, Gly175, Lys176, and Thr177 each coordinate ATP. Residues 346-465 (RFKGAPIDLD…YKNLLRLLQS (120 aa)) form a domain IV, binds dsDNA region.

The protein belongs to the DnaA family. Oligomerizes as a right-handed, spiral filament on DNA at oriC.

It localises to the cytoplasm. Plays an essential role in the initiation and regulation of chromosomal replication. ATP-DnaA binds to the origin of replication (oriC) to initiate formation of the DNA replication initiation complex once per cell cycle. Binds the DnaA box (a 9 base pair repeat at the origin) and separates the double-stranded (ds)DNA. Forms a right-handed helical filament on oriC DNA; dsDNA binds to the exterior of the filament while single-stranded (ss)DNA is stabiized in the filament's interior. The ATP-DnaA-oriC complex binds and stabilizes one strand of the AT-rich DNA unwinding element (DUE), permitting loading of DNA polymerase. After initiation quickly degrades to an ADP-DnaA complex that is not apt for DNA replication. Binds acidic phospholipids. In Acinetobacter baumannii (strain AB307-0294), this protein is Chromosomal replication initiator protein DnaA.